The chain runs to 265 residues: Ribosomal RNA small subunit methyltransferase A (265 aa).

S-adenosyl-L-methionine contacts are provided by His-13, Leu-15, Gly-40, Glu-61, Asp-85, and Asn-103.

This sequence belongs to the class I-like SAM-binding methyltransferase superfamily. rRNA adenine N(6)-methyltransferase family. RsmA subfamily.

It localises to the cytoplasm. It carries out the reaction adenosine(1518)/adenosine(1519) in 16S rRNA + 4 S-adenosyl-L-methionine = N(6)-dimethyladenosine(1518)/N(6)-dimethyladenosine(1519) in 16S rRNA + 4 S-adenosyl-L-homocysteine + 4 H(+). Functionally, specifically dimethylates two adjacent adenosines (A1518 and A1519) in the loop of a conserved hairpin near the 3'-end of 16S rRNA in the 30S particle. May play a critical role in biogenesis of 30S subunits. This Bordetella bronchiseptica (strain ATCC BAA-588 / NCTC 13252 / RB50) (Alcaligenes bronchisepticus) protein is Ribosomal RNA small subunit methyltransferase A.